The primary structure comprises 73 residues: Conotoxin CnIIIF (73 aa).

The signal sequence occupies residues 1 to 19; it reads MSKLGVLLTICLLLFPLTA. Positions 20–51 are excised as a propeptide; sequence LPMDGDQSVDRPAERMQDDISSGQHPLFNQKR. 3 cysteine pairs are disulfide-bonded: Cys-53/Cys-72, Cys-54/Cys-70, and Cys-60/Cys-73.

The protein belongs to the conotoxin M superfamily. Expressed by the venom duct.

It is found in the secreted. Its function is as follows. Shows a paralytic effect in fish. This Conus consors (Singed cone) protein is Conotoxin CnIIIF.